The following is a 433-amino-acid chain: Protein translocase subunit SecD (433 aa).

6 helical membrane passes run 7–27, 257–277, 278–298, 300–320, 354–374, and 380–400; these read LAFL…GPKI, LIAG…AYRM, AGLI…LTFA, LHVV…GIAV, TIVD…IFGG, and GFAV…VLFA.

This sequence belongs to the SecD/SecF family. SecD subfamily. As to quaternary structure, forms a complex with SecF. Part of the essential Sec protein translocation apparatus which comprises SecA, SecYEG and auxiliary proteins SecDF. Other proteins may also be involved.

It localises to the cell membrane. Functionally, part of the Sec protein translocase complex. Interacts with the SecYEG preprotein conducting channel. SecDF uses the proton motive force (PMF) to complete protein translocation after the ATP-dependent function of SecA. The polypeptide is Protein translocase subunit SecD (Alicyclobacillus acidocaldarius subsp. acidocaldarius (strain ATCC 27009 / DSM 446 / BCRC 14685 / JCM 5260 / KCTC 1825 / NBRC 15652 / NCIMB 11725 / NRRL B-14509 / 104-IA) (Bacillus acidocaldarius)).